Here is a 420-residue protein sequence, read N- to C-terminus: MRYAMNKIPALLLVGALIIATVASGCIGGTTTTETPTVTKTKTQEVITLKVIGPWSGAELDAFMEVLKAFEKQHPNIKIEYKTYRAEDLSTILPLQFESHDTPADVIFMWGWFIAEMGKKGHLMELNNIINPEEYVPGILDSVTVDGKIYGAPFTAAAKPGFWYRKSFFEKHNLKPPKTWDDFVALLEEIKKIPGIKAPIVSGDSVGWPLSDVTEHFILTFGGKDLQLKLIKGEVKWEDPQVRKIFEEKLVPLLKAGYFSDPIEWTSAVDLWWKGEYALYFMGTWITGMVDDPNDLGLIPLPGVKAMVIAPDYLMVPKYTSHPKEALELAKFLATEGQRIHVGTKSGKLATWKKVSIDDYWAPMRDVAKIVANVESAPDLDDSVGGEWQKVFWDQLKLLWVQPDRLDEVLKTLDEKFPKK.

Residues M1–G25 form the signal peptide. C26 is modified (N-acetylcysteine). C26 carries the S-archaeol cysteine lipid modification.

The protein belongs to the bacterial solute-binding protein 1 family.

Its subcellular location is the cell membrane. Functionally, probably part of a binding-protein-dependent transport system PH1036/38/39. This is an uncharacterized protein from Pyrococcus horikoshii (strain ATCC 700860 / DSM 12428 / JCM 9974 / NBRC 100139 / OT-3).